A 97-amino-acid polypeptide reads, in one-letter code: uncharacterized protein (97 aa).

A run of 3 helical transmembrane segments spans residues Thr5 to Val25, Met27 to Tyr47, and Ile77 to Leu97.

Its subcellular location is the membrane. This is an uncharacterized protein from Saccharomyces cerevisiae (strain ATCC 204508 / S288c) (Baker's yeast).